The primary structure comprises 339 residues: tRNA dimethylallyltransferase (339 aa).

36-43 is an ATP binding site; it reads GPTGSGKT. 38–43 is a substrate binding site; it reads TGSGKT. Residues 61 to 64 are interaction with substrate tRNA; it reads DSMQ.

The protein belongs to the IPP transferase family. As to quaternary structure, monomer. Requires Mg(2+) as cofactor.

It catalyses the reaction adenosine(37) in tRNA + dimethylallyl diphosphate = N(6)-dimethylallyladenosine(37) in tRNA + diphosphate. Catalyzes the transfer of a dimethylallyl group onto the adenine at position 37 in tRNAs that read codons beginning with uridine, leading to the formation of N6-(dimethylallyl)adenosine (i(6)A). This is tRNA dimethylallyltransferase from Chlamydia trachomatis serovar A (strain ATCC VR-571B / DSM 19440 / HAR-13).